The sequence spans 1161 residues: Lysine-specific demethylase 2A (1161 aa).

The residue at position 28 (Ser28) is a Phosphoserine. Residues 148–316 form the JmjC domain; sequence FSHTRLENMV…MQLKIYSIED (169 aa). Residue Thr209 participates in substrate binding. Fe cation-binding residues include His212 and Asp214. Lys229 serves as a coordination point for substrate. His284 contributes to the Fe cation binding site. Phosphoserine is present on residues Ser390 and Ser394. The segment covering 419–433 has biased composition (low complexity); that stretch reads KTLSGDSSSDSTRGS. The interval 419–445 is disordered; the sequence is KTLSGDSSSDSTRGSHNGQVWDPQCSP. Residue Ser444 is modified to Phosphoserine. Residue Lys505 forms a Glycyl lysine isopeptide (Lys-Gly) (interchain with G-Cter in SUMO2) linkage. The interval 532 to 557 is disordered; it reads VPTIPITKPHTMKPAPRLTPVRPAAA. At Thr550 the chain carries Phosphothreonine. At Ser558 the chain carries Phosphoserine. The CXXC-type zinc finger occupies 564–610; sequence ARRRRVRCRKCKACVQGECGVCHYCRDMKKFGGPGRMKQSCVLRQCL. Zn(2+) is bound by residues Cys571, Cys574, Cys577, Cys582, Cys585, Cys588, Cys604, Cys609, Cys620, and Cys623. The PHD-type zinc finger occupies 617–678; the sequence is SVTCSLCGEV…CWECPKCYQE (62 aa). Thr632 carries the post-translational modification Phosphothreonine. Zn(2+) contacts are provided by Cys642, Cys645, His650, Cys653, Cys672, and Cys675. Residue Ser692 is modified to Phosphoserine. The tract at residues 705-789 is disordered; it reads LRSCEEPLTP…PSGKKELSEV (85 aa). Thr713 carries the post-translational modification Phosphothreonine. A phosphoserine mark is found at Ser718 and Ser731. Basic and acidic residues-rich tracts occupy residues 746–757 and 771–789; these read SDHHSASRDERF and TMVR…LSEV. 3 positions are modified to phosphoserine: Ser825, Ser868, and Ser882. Positions 840-886 are disordered; it reads CPARNPQHGDEEGLGGEEEEEEEEEEDDSAEEGGAARLNGRGSWAQD. Residues 851–870 are compositionally biased toward acidic residues; that stretch reads EGLGGEEEEEEEEEEDDSAE. The F-box domain maps to 888–935; it reads DESWMQREVWMSVFRYLSRKELCECMRVCKTWYKWCCDKRLWTKIDLS. 2 LRR repeats span residues 960 to 981 and 983 to 1009; these read WTNI…LKDL and LAGC…DLRW. Position 1019 is an ADP-ribosylarginine (Arg1019). 4 LRR repeats span residues 1047–1072, 1073–1102, 1103–1127, and 1128–1155; these read GLDI…DLSH, CSHL…NMAG, CNKL…DLRG, and CKQI…SDEK.

This sequence belongs to the JHDM1 histone demethylase family. Part of a SCF (SKP1-cullin-F-box) protein ligase complex. Interacts with CBX5/HP1A; the interaction promotes CBX5 localization to chromatin. The SKP1-KDM2A complex interacts with UBB. It depends on Fe(2+) as a cofactor. Mono-ADP-ribosylated at Arg-1019 in response to DNA damage, leading to displacement from chromatin, resulting in increased dimethylation of histone H3 at 'Lys-36'.

Its subcellular location is the nucleus. The protein localises to the nucleoplasm. It localises to the chromosome. The enzyme catalyses N(6),N(6)-dimethyl-L-lysyl(36)-[histone H3] + 2 2-oxoglutarate + 2 O2 = L-lysyl(36)-[histone H3] + 2 formaldehyde + 2 succinate + 2 CO2. Its function is as follows. Histone demethylase that specifically demethylates 'Lys-36' of histone H3, thereby playing a central role in histone code. Preferentially demethylates dimethylated H3 'Lys-36' residue while it has weak or no activity for mono- and tri-methylated H3 'Lys-36'. May also recognize and bind to some phosphorylated proteins and promote their ubiquitination and degradation. Required to maintain the heterochromatic state. Associates with centromeres and represses transcription of small non-coding RNAs that are encoded by the clusters of satellite repeats at the centromere. Required to sustain centromeric integrity and genomic stability, particularly during mitosis. Regulates circadian gene expression by repressing the transcriptional activator activity of CLOCK-BMAL1 heterodimer and RORA in a catalytically-independent manner. This is Lysine-specific demethylase 2A (Kdm2a) from Mus musculus (Mouse).